Consider the following 298-residue polypeptide: Protease HtpX homolog (298 aa).

Helical transmembrane passes span 16-36 and 38-58; these read VMFG…YLFW and SWVS…LIMI. Histidine 144 is a binding site for Zn(2+). Residue glutamate 145 is part of the active site. Residue histidine 148 participates in Zn(2+) binding. 2 consecutive transmembrane segments (helical) span residues 159-179 and 197-217; these read IALA…NWFW and IIGL…ASIA. Glutamate 226 is a binding site for Zn(2+).

The protein belongs to the peptidase M48B family. It depends on Zn(2+) as a cofactor.

It localises to the cell membrane. The polypeptide is Protease HtpX homolog (Levilactobacillus brevis (strain ATCC 367 / BCRC 12310 / CIP 105137 / JCM 1170 / LMG 11437 / NCIMB 947 / NCTC 947) (Lactobacillus brevis)).